A 356-amino-acid chain; its full sequence is Phosphate acyltransferase (356 aa).

The protein belongs to the PlsX family. As to quaternary structure, homodimer. Probably interacts with PlsY.

The protein localises to the cytoplasm. The catalysed reaction is a fatty acyl-[ACP] + phosphate = an acyl phosphate + holo-[ACP]. It participates in lipid metabolism; phospholipid metabolism. Its function is as follows. Catalyzes the reversible formation of acyl-phosphate (acyl-PO(4)) from acyl-[acyl-carrier-protein] (acyl-ACP). This enzyme utilizes acyl-ACP as fatty acyl donor, but not acyl-CoA. This chain is Phosphate acyltransferase, found in Bartonella bacilliformis (strain ATCC 35685 / KC583 / Herrer 020/F12,63).